The sequence spans 341 residues: Ribulose-5-phosphate reductase (341 aa).

Zn(2+) contacts are provided by Cys-38, His-64, Glu-65, and Glu-144.

It belongs to the zinc-containing alcohol dehydrogenase family. It depends on Zn(2+) as a cofactor.

It carries out the reaction D-ribitol 5-phosphate + NADP(+) = D-ribulose 5-phosphate + NADPH + H(+). It functions in the pathway cell wall biogenesis; poly(ribitol phosphate) teichoic acid biosynthesis. Functionally, catalyzes the NADPH dependent reduction of D-ribulose 5-phosphate to D-ribitol 5-phosphate. The protein is Ribulose-5-phosphate reductase of Bacillus spizizenii (strain ATCC 23059 / NRRL B-14472 / W23) (Bacillus subtilis subsp. spizizenii).